We begin with the raw amino-acid sequence, 433 residues long: Methylenetetrahydrofolate--tRNA-(uracil-5-)-methyltransferase TrmFO (433 aa).

An FAD-binding site is contributed by 7-12 (GGGLAG).

The protein belongs to the MnmG family. TrmFO subfamily. It depends on FAD as a cofactor.

It is found in the cytoplasm. It catalyses the reaction uridine(54) in tRNA + (6R)-5,10-methylene-5,6,7,8-tetrahydrofolate + NADH + H(+) = 5-methyluridine(54) in tRNA + (6S)-5,6,7,8-tetrahydrofolate + NAD(+). The enzyme catalyses uridine(54) in tRNA + (6R)-5,10-methylene-5,6,7,8-tetrahydrofolate + NADPH + H(+) = 5-methyluridine(54) in tRNA + (6S)-5,6,7,8-tetrahydrofolate + NADP(+). Functionally, catalyzes the folate-dependent formation of 5-methyl-uridine at position 54 (M-5-U54) in all tRNAs. The protein is Methylenetetrahydrofolate--tRNA-(uracil-5-)-methyltransferase TrmFO of Natranaerobius thermophilus (strain ATCC BAA-1301 / DSM 18059 / JW/NM-WN-LF).